We begin with the raw amino-acid sequence, 387 residues long: Mannitol-1-phosphate 5-dehydrogenase (387 aa).

3 to 14 (ALHFGAGNIGRG) provides a ligand contact to NAD(+).

Belongs to the mannitol dehydrogenase family.

It carries out the reaction D-mannitol 1-phosphate + NAD(+) = beta-D-fructose 6-phosphate + NADH + H(+). This chain is Mannitol-1-phosphate 5-dehydrogenase, found in Yersinia pseudotuberculosis serotype O:3 (strain YPIII).